A 312-amino-acid polypeptide reads, in one-letter code: Olfactory receptor 51B2 (312 aa).

The Extracellular segment spans residues 1 to 23 (MWPNITAAPFLLTGFPGLEAAHH). Residue asparagine 4 is glycosylated (N-linked (GlcNAc...) asparagine). Residues 24-44 (WISIPFFAVYVCILLGNGMLL) traverse the membrane as a helical segment. At 45-52 (YLIKHDHS) the chain is on the cytoplasmic side. Residues 53 to 73 (LHEPMYYFLTMLAGTDLMVTL) traverse the membrane as a helical segment. Topologically, residues 74–97 (TTMPTVMGILWVNHREISSVGCFL) are extracellular. Cysteines 95 and 187 form a disulfide. The helical transmembrane segment at 98 to 118 (QAYFIHSLSVVESGSLLAMAY) threads the bilayer. Residues 119 to 137 (DCFIAIRNPLRYASILTNT) are Cytoplasmic-facing. The helical transmembrane segment at 138-158 (RVIALGVGVFLRGFVSILPVI) threads the bilayer. The Extracellular segment spans residues 159-194 (LRLFSFSYCKSHVITRAFCLHQEIMRLACADITFNR). Residues 195–215 (LYPVILISLTIFLDCLIILFS) form a helical membrane-spanning segment. Residues 216–235 (YILILNTVIGIASGEERAKA) lie on the Cytoplasmic side of the membrane. The helical transmembrane segment at 236–256 (LNTCISHISCVLIFYVTVMGL) threads the bilayer. The Extracellular portion of the chain corresponds to 257-271 (TFIYRFGKNVPEVVH). Residues 272–292 (IIMSYIYFLFPPLMNPVIYSI) traverse the membrane as a helical segment. The Cytoplasmic portion of the chain corresponds to 293–312 (KTKQIQYGIIRLLSKHRFSS).

The protein belongs to the G-protein coupled receptor 1 family. Post-translationally, ubiquitinated by the CRL2(FEM1A) and CRL2(FEM1C) complexes, which recognize the -Lys-Xaa-Xaa-Arg C-degron at the C-terminus, leading to its degradation.

The protein resides in the cell membrane. Its function is as follows. Odorant receptor. The polypeptide is Olfactory receptor 51B2 (OR51B2) (Homo sapiens (Human)).